The sequence spans 391 residues: GTPase Obg (391 aa).

Residues 1–159 (MKFIDEALIR…RDLLLELMLL (159 aa)) enclose the Obg domain. One can recognise an OBG-type G domain in the interval 160–333 (ADVGMLGLPN…LTRDIMDFIE (174 aa)). GTP is bound by residues 166-173 (GLPNAGKS), 191-195 (FTTLV), 213-216 (DIPG), 283-286 (NKID), and 314-316 (SAA). Residues Ser-173 and Thr-193 each coordinate Mg(2+).

The protein belongs to the TRAFAC class OBG-HflX-like GTPase superfamily. OBG GTPase family. Monomer. Requires Mg(2+) as cofactor.

It is found in the cytoplasm. In terms of biological role, an essential GTPase which binds GTP, GDP and possibly (p)ppGpp with moderate affinity, with high nucleotide exchange rates and a fairly low GTP hydrolysis rate. Plays a role in control of the cell cycle, stress response, ribosome biogenesis and in those bacteria that undergo differentiation, in morphogenesis control. The sequence is that of GTPase Obg from Haemophilus ducreyi (strain 35000HP / ATCC 700724).